The primary structure comprises 348 residues: Dihydroorotase (348 aa).

His-17 and His-19 together coordinate Zn(2+). Residues 19 to 21 and Asn-45 contribute to the substrate site; that span reads HLR. The Zn(2+) site is built by Lys-103, His-140, and His-178. Lys-103 carries the post-translational modification N6-carboxylysine. Substrate is bound at residue His-140. Residue Leu-223 coordinates substrate. A Zn(2+)-binding site is contributed by Asp-251. Asp-251 is an active-site residue. Substrate-binding residues include His-255 and Ala-267.

It belongs to the metallo-dependent hydrolases superfamily. DHOase family. Class II DHOase subfamily. In terms of assembly, homodimer. Zn(2+) is required as a cofactor.

It catalyses the reaction (S)-dihydroorotate + H2O = N-carbamoyl-L-aspartate + H(+). The protein operates within pyrimidine metabolism; UMP biosynthesis via de novo pathway; (S)-dihydroorotate from bicarbonate: step 3/3. Its function is as follows. Catalyzes the reversible cyclization of carbamoyl aspartate to dihydroorotate. In Yersinia pseudotuberculosis serotype I (strain IP32953), this protein is Dihydroorotase.